We begin with the raw amino-acid sequence, 515 residues long: Maturase K (515 aa).

It belongs to the intron maturase 2 family. MatK subfamily.

The protein resides in the plastid. It localises to the chloroplast. Functionally, usually encoded in the trnK tRNA gene intron. Probably assists in splicing its own and other chloroplast group II introns. The chain is Maturase K from Pinus cembra (Swiss stone pine).